The primary structure comprises 510 residues: NAD(P)H-quinone oxidoreductase subunit 2 B, chloroplastic (510 aa).

The next 13 helical transmembrane spans lie at 24 to 44 (LLLFDGSLIFPECILIFGLIL), 57 to 77 (IPWLYFISSTSLVMSITALLF), 99 to 119 (IFQFLILLCSTLCIPLSVEYI), 124 to 144 (MAITEFLLFILTATIGGMFLC), 149 to 169 (LITIFVAPECFSLCSYLLSGY), 183 to 203 (YLLMGGASSSILVHGFSWLYG), 227 to 247 (PGISIALIFITVGIGFKLSPA), 295 to 315 (WHLLLEILAILSMILGNLIAI), 323 to 343 (MLAYSSIGQIGYVIIGIIVGD), 354 to 374 (YMLFYISMNLGTFACIVLFGL), 395 to 415 (ALSLALCLLSLGGLPPLAGFF), 418 to 438 (LYLFWCGWQAGLYLLVLIGLL), and 484 to 504 (MIVCVIASTIPGISMNPIIAI).

This sequence belongs to the complex I subunit 2 family. As to quaternary structure, NDH is composed of at least 16 different subunits, 5 of which are encoded in the nucleus.

Its subcellular location is the plastid. It is found in the chloroplast thylakoid membrane. It carries out the reaction a plastoquinone + NADH + (n+1) H(+)(in) = a plastoquinol + NAD(+) + n H(+)(out). It catalyses the reaction a plastoquinone + NADPH + (n+1) H(+)(in) = a plastoquinol + NADP(+) + n H(+)(out). Functionally, NDH shuttles electrons from NAD(P)H:plastoquinone, via FMN and iron-sulfur (Fe-S) centers, to quinones in the photosynthetic chain and possibly in a chloroplast respiratory chain. The immediate electron acceptor for the enzyme in this species is believed to be plastoquinone. Couples the redox reaction to proton translocation, and thus conserves the redox energy in a proton gradient. This is NAD(P)H-quinone oxidoreductase subunit 2 B, chloroplastic from Helianthus annuus (Common sunflower).